A 144-amino-acid chain; its full sequence is HMG1/2-like protein (144 aa).

Disordered regions lie at residues methionine 1 to alanine 42 and proline 85 to aspartate 144. 2 stretches are compositionally biased toward basic and acidic residues: residues alanine 8–lysine 35 and lysine 89–lysine 99. A DNA-binding region (HMG box) is located at residues proline 36–asparagine 105. Acidic residues predominate over residues asparagine 126–aspartate 144.

The protein belongs to the HMGB family. In terms of tissue distribution, expressed at higher levels in dark-grown tissues, such as roots; and at lower levels in light-grown tissues, such as cotyledons and stems.

It localises to the nucleus. This Ipomoea nil (Japanese morning glory) protein is HMG1/2-like protein.